A 297-amino-acid polypeptide reads, in one-letter code: Small ribosomal subunit protein uS2 (297 aa).

Residues G266–W297 are disordered. The span at A282–W297 shows a compositional bias: low complexity.

The protein belongs to the universal ribosomal protein uS2 family. Component of the small ribosomal subunit. Mature ribosomes consist of a small (40S) and a large (60S) subunit. The 40S subunit contains about 33 different proteins and 1 molecule of RNA (18S). The 60S subunit contains about 49 different proteins and 3 molecules of RNA (25S, 5.8S and 5S). Interacts with rps21.

The protein localises to the cytoplasm. Functionally, required for the assembly and/or stability of the 40S ribosomal subunit. Required for the processing of the 20S rRNA-precursor to mature 18S rRNA in a late step of the maturation of 40S ribosomal subunits. The polypeptide is Small ribosomal subunit protein uS2 (rps0) (Sclerotinia sclerotiorum (strain ATCC 18683 / 1980 / Ss-1) (White mold)).